A 130-amino-acid polypeptide reads, in one-letter code: Glycine cleavage system H protein (130 aa).

Positions 24 to 106 constitute a Lipoyl-binding domain; the sequence is SVTVGITEHA…YGDGWIMRIQ (83 aa). Residue lysine 65 is modified to N6-lipoyllysine.

Belongs to the GcvH family. The glycine cleavage system is composed of four proteins: P, T, L and H. It depends on (R)-lipoate as a cofactor.

Its function is as follows. The glycine cleavage system catalyzes the degradation of glycine. The H protein shuttles the methylamine group of glycine from the P protein to the T protein. This is Glycine cleavage system H protein from Halorhodospira halophila (strain DSM 244 / SL1) (Ectothiorhodospira halophila (strain DSM 244 / SL1)).